The following is a 343-amino-acid chain: Protein RecA (343 aa).

65-72 is an ATP binding site; that stretch reads GPESSGKT.

The protein belongs to the RecA family.

It is found in the cytoplasm. Functionally, can catalyze the hydrolysis of ATP in the presence of single-stranded DNA, the ATP-dependent uptake of single-stranded DNA by duplex DNA, and the ATP-dependent hybridization of homologous single-stranded DNAs. It interacts with LexA causing its activation and leading to its autocatalytic cleavage. The polypeptide is Protein RecA (Pseudoalteromonas atlantica (strain T6c / ATCC BAA-1087)).